Here is a 304-residue protein sequence, read N- to C-terminus: N-acetyl-D-glucosamine kinase (304 aa).

ATP is bound by residues glycine 4–lysine 11 and glycine 133–phenylalanine 140. Residues histidine 157, cysteine 178, cysteine 180, and cysteine 185 each contribute to the Zn(2+) site.

It belongs to the ROK (NagC/XylR) family. NagK subfamily.

It carries out the reaction N-acetyl-D-glucosamine + ATP = N-acetyl-D-glucosamine 6-phosphate + ADP + H(+). It participates in cell wall biogenesis; peptidoglycan recycling. Functionally, catalyzes the phosphorylation of N-acetyl-D-glucosamine (GlcNAc) derived from cell-wall degradation, yielding GlcNAc-6-P. The sequence is that of N-acetyl-D-glucosamine kinase from Mannheimia succiniciproducens (strain KCTC 0769BP / MBEL55E).